A 400-amino-acid chain; its full sequence is Nicotinate phosphoribosyltransferase (400 aa).

Phosphohistidine; by autocatalysis is present on histidine 220.

It belongs to the NAPRTase family. In terms of processing, transiently phosphorylated on a His residue during the reaction cycle. Phosphorylation strongly increases the affinity for substrates and increases the rate of nicotinate D-ribonucleotide production. Dephosphorylation regenerates the low-affinity form of the enzyme, leading to product release.

The catalysed reaction is nicotinate + 5-phospho-alpha-D-ribose 1-diphosphate + ATP + H2O = nicotinate beta-D-ribonucleotide + ADP + phosphate + diphosphate. Its pathway is cofactor biosynthesis; NAD(+) biosynthesis; nicotinate D-ribonucleotide from nicotinate: step 1/1. In terms of biological role, catalyzes the synthesis of beta-nicotinate D-ribonucleotide from nicotinate and 5-phospho-D-ribose 1-phosphate at the expense of ATP. The chain is Nicotinate phosphoribosyltransferase from Salmonella newport (strain SL254).